Reading from the N-terminus, the 350-residue chain is Derriere protein (350 aa).

The N-terminal stretch at 1-16 is a signal peptide; it reads MLSLACFFSFLLMVKS. Residues 17–236 constitute a propeptide that is removed on maturation; it reads SPLTFQERML…SSCKTPRAKR (220 aa). N-linked (GlcNAc...) asparagine glycans are attached at residues Asn171 and Asn202. 3 disulfides stabilise this stretch: Cys249–Cys315, Cys278–Cys347, and Cys282–Cys349.

Belongs to the TGF-beta family. Homodimer; disulfide-linked. Also forms heterodimers with other TGF-beta family members including nodal2/nr-2 and bmp4.

Its subcellular location is the secreted. Its function is as follows. Required for posterior mesoderm formation during embryogenesis. Acts indirectly to suppress head formation by altering mesodermal patterning. Also involved in the establishment of left-right axis asymmetry, acting upstream of nodal/nr-1. Can exert long-range effects in the embryo. The sequence is that of Derriere protein from Xenopus tropicalis (Western clawed frog).